Reading from the N-terminus, the 429-residue chain is Histidine--tRNA ligase (429 aa).

This sequence belongs to the class-II aminoacyl-tRNA synthetase family. Homodimer.

Its subcellular location is the cytoplasm. The catalysed reaction is tRNA(His) + L-histidine + ATP = L-histidyl-tRNA(His) + AMP + diphosphate + H(+). This Pseudomonas putida (strain GB-1) protein is Histidine--tRNA ligase.